A 260-amino-acid polypeptide reads, in one-letter code: HTH-type transcriptional activator FapR (260 aa).

The HTH araC/xylS-type domain maps to 154-251; the sequence is ERIVTLLFSD…GVTPKKFEIG (98 aa). 2 DNA-binding regions (H-T-H motif) span residues 171-192 and 218-241; these read SDIA…EQEC and IGMI…KEYY.

As to quaternary structure, homodimer.

Positive regulator of the expression of the 987P operon for the fimbrial protein in enterotoxigenic E.coli. This is HTH-type transcriptional activator FapR from Escherichia coli.